Reading from the N-terminus, the 99-residue chain is UPF0235 protein Avin_03050 (99 aa).

Positions 66 to 99 are disordered; that stretch reads VSLESGESNRQKRVRIRRPRQLPALPGLAPRPDA. The segment covering 76–85 has biased composition (basic residues); sequence QKRVRIRRPR.

It belongs to the UPF0235 family.

This is UPF0235 protein Avin_03050 from Azotobacter vinelandii (strain DJ / ATCC BAA-1303).